The sequence spans 432 residues: Enolase (432 aa).

Q163 lines the (2R)-2-phosphoglycerate pocket. Residue E205 is the Proton donor of the active site. Mg(2+) contacts are provided by D242, E285, and D312. (2R)-2-phosphoglycerate is bound by residues K337, R366, S367, and K388. The active-site Proton acceptor is the K337.

Belongs to the enolase family. Requires Mg(2+) as cofactor.

It is found in the cytoplasm. The protein resides in the secreted. Its subcellular location is the cell surface. It catalyses the reaction (2R)-2-phosphoglycerate = phosphoenolpyruvate + H2O. It participates in carbohydrate degradation; glycolysis; pyruvate from D-glyceraldehyde 3-phosphate: step 4/5. Catalyzes the reversible conversion of 2-phosphoglycerate (2-PG) into phosphoenolpyruvate (PEP). It is essential for the degradation of carbohydrates via glycolysis. The protein is Enolase of Bifidobacterium longum (strain DJO10A).